The chain runs to 207 residues: High frequency lysogenization protein HflD homolog (207 aa).

Belongs to the HflD family.

It is found in the cytoplasm. The protein localises to the cell inner membrane. In Pseudomonas fluorescens (strain ATCC BAA-477 / NRRL B-23932 / Pf-5), this protein is High frequency lysogenization protein HflD homolog.